A 1074-amino-acid polypeptide reads, in one-letter code: BRD4-interacting chromatin-remodeling complex-associated protein-like (1074 aa).

Disordered stretches follow at residues A542–G603, T620–R689, T834–F874, and G887–P952. Composition is skewed to polar residues over residues S544–R576, A591–G603, T620–T629, and G660–Q680. Phosphoserine is present on S621. Basic and acidic residues-rich tracts occupy residues I889–R904, P913–K925, and E934–E948. S976 carries the post-translational modification Phosphoserine.

As to quaternary structure, component of the multiprotein chromatin-remodeling complexes SWI/SNF: SWI/SNF-A (BAF), SWI/SNF-B (PBAF) and related complexes. The canonical complex contains a catalytic subunit (either SMARCA4/BRG1/BAF190A or SMARCA2/BRM/BAF190B) and at least SMARCE1, ACTL6A/BAF53, SMARCC1/BAF155, SMARCC2/BAF170, and SMARCB1/SNF5/BAF47. Other subunits specific to each of the complexes may also be present permitting several possible combinations developmentally and tissue specific. Component of the SWI/SNF (GBAF) subcomplex, which includes at least BICRA or BICRAL (mutually exclusive), BRD9, SS18, the core BAF subunits, SMARCA2/BRM, SMARCA4/BRG1/BAF190A, ACTL6A/BAF53, SMARCC1/BAF155, and SMARCD1/BAF60A.

In terms of biological role, component of SWI/SNF chromatin remodeling subcomplex GBAF that carries out key enzymatic activities, changing chromatin structure by altering DNA-histone contacts within a nucleosome in an ATP-dependent manner. The polypeptide is BRD4-interacting chromatin-remodeling complex-associated protein-like (Mus musculus (Mouse)).